The chain runs to 431 residues: Isocitrate lyase (431 aa).

The disordered stretch occupies residues 1–21 (MSNVGTPRTAQEIQQDWDTNP). Position 93–95 (93–95 (SGW)) interacts with substrate. Asp-155 serves as a coordination point for Mg(2+). The active-site Proton acceptor is Cys-193. Substrate contacts are provided by residues 194–195 (GH), Arg-230, 315–319 (NCSPS), and Thr-349.

This sequence belongs to the isocitrate lyase/PEP mutase superfamily. Isocitrate lyase family. In terms of assembly, homotetramer. The cofactor is Mg(2+).

It catalyses the reaction D-threo-isocitrate = glyoxylate + succinate. Its pathway is carbohydrate metabolism; glyoxylate cycle; (S)-malate from isocitrate: step 1/2. Functionally, involved in the metabolic adaptation in response to environmental changes. Catalyzes the reversible formation of succinate and glyoxylate from isocitrate, a key step of the glyoxylate cycle, which operates as an anaplerotic route for replenishing the tricarboxylic acid cycle during growth on fatty acid substrates. This chain is Isocitrate lyase (aceA), found in Corynebacterium efficiens (strain DSM 44549 / YS-314 / AJ 12310 / JCM 11189 / NBRC 100395).